Here is a 462-residue protein sequence, read N- to C-terminus: Probable DNA-directed RNA polymerase subunit 343L (462 aa).

Belongs to the RNA polymerase beta' chain family.

The catalysed reaction is RNA(n) + a ribonucleoside 5'-triphosphate = RNA(n+1) + diphosphate. In terms of biological role, component of the DNA-dependent RNA polymerase that catalyzes the transcription in the cytoplasm of viral DNA into RNA using the four ribonucleoside triphosphates as substrates. This chain is Probable DNA-directed RNA polymerase subunit 343L, found in Acheta domesticus (House cricket).